Consider the following 386-residue polypeptide: Nucleosome assembly protein 1-like 4 (386 aa).

The segment at 1-29 is disordered; sequence MADNSFSDGVPSDSLEAAKNASNTEKLTD. The residue at position 2 (alanine 2) is an N-acetylalanine. 3 positions are modified to phosphoserine: serine 5, serine 7, and serine 12. Residues 20–29 show a composition bias toward polar residues; that stretch reads NASNTEKLTD. Residue serine 49 is modified to Phosphoserine. Phosphothreonine is present on threonine 51. Serine 53 and serine 54 each carry phosphoserine. Threonine 58 is subject to Phosphothreonine. At lysine 105 the chain carries N6-acetyllysine. Serine 125 bears the Phosphoserine mark. An N6-acetyllysine modification is found at lysine 146. Positions 265 to 271 match the Nuclear localization signal motif; it reads IKKKQKH. A Phosphoserine modification is found at serine 304. Positions 339 to 370 are enriched in acidic residues; that stretch reads AIEDDDNFEEGEEGEEEELEGDEEAEDDDDAE. The disordered stretch occupies residues 339–386; the sequence is AIEDDDNFEEGEEGEEEELEGDEEAEDDDDAEINPKKEPSQPSECKQQ.

The protein belongs to the nucleosome assembly protein (NAP) family. As to quaternary structure, interacts with core (H2A, H2B, H3, H4) and linker (H1) histones. In terms of processing, polyglutamylated and polyglycylated. These 2 modifications occur exclusively on glutamate residues and result in either polyglutamate or polyglycine chains on the gamma-carboxyl group. Both modifications can coexist on the same protein on adjacent residues, and lowering polyglycylation levels increases polyglutamylation, and reciprocally. Polyglutamylated by TTLL4. Phosphorylated at the G0/G1 boundary but it is not phosphorylated in S-phase. Phosphorylated protein remains in the cytoplasm in a complex with histones during the G0/G1 transition, whereas dephosphorylation triggers its transport into the nucleus at the G1/S-boundary.

Its subcellular location is the nucleus. The protein localises to the cytoplasm. Functionally, acts as a histone chaperone in nucleosome assembly. The chain is Nucleosome assembly protein 1-like 4 (NAP1L4) from Bos taurus (Bovine).